The sequence spans 176 residues: N,N-dimethyl phenylurea N-demethylase subunit beta (176 aa).

Belongs to the bacterial ring-hydroxylating dioxygenase beta subunit family. In terms of assembly, pdmA (subunit alpha) and PdmB (subunit beta) form the oxygenase component of a bacterial Rieske non-heme iron oxygenase (RO) system.

It catalyses the reaction a 1,1-dimethyl-3-phenylurea + 2 reduced [2Fe-2S]-[ferredoxin] + O2 + 2 H(+) = a 1-methyl-3-phenylurea + formaldehyde + 2 oxidized [2Fe-2S]-[ferredoxin] + H2O. It carries out the reaction isoproturon + 2 reduced [2Fe-2S]-[ferredoxin] + O2 + 2 H(+) = 1-methyl-3-[4-(propan-2-yl)phenyl]urea + formaldehyde + 2 oxidized [2Fe-2S]-[ferredoxin] + H2O. The enzyme catalyses chlorotoluron + 2 reduced [2Fe-2S]-[ferredoxin] + O2 + 2 H(+) = 3-(3-chloro-4-methylphenyl)-1-methylurea + formaldehyde + 2 oxidized [2Fe-2S]-[ferredoxin] + H2O. The catalysed reaction is metoxuron + 2 reduced [2Fe-2S]-[ferredoxin] + O2 + 2 H(+) = 3-(3-chloro-4-methoxylphenyl)-1-methylurea + formaldehyde + 2 oxidized [2Fe-2S]-[ferredoxin] + H2O. It catalyses the reaction monuron + 2 reduced [2Fe-2S]-[ferredoxin] + O2 + 2 H(+) = 3-(4-chlorophenyl)-1-methylurea + formaldehyde + 2 oxidized [2Fe-2S]-[ferredoxin] + H2O. It carries out the reaction diuron + 2 reduced [2Fe-2S]-[ferredoxin] + O2 + 2 H(+) = 3-(3,4-dichlorophenyl)-1-methylurea + formaldehyde + 2 oxidized [2Fe-2S]-[ferredoxin] + H2O. The enzyme catalyses fluometuron + 2 reduced [2Fe-2S]-[ferredoxin] + O2 + 2 H(+) = 3-[3-(trifluoromethyl)phenyl]-1-methylurea + formaldehyde + 2 oxidized [2Fe-2S]-[ferredoxin] + H2O. The catalysed reaction is fenuron + 2 reduced [2Fe-2S]-[ferredoxin] + O2 + 2 H(+) = 1-methyl-3-phenylurea + formaldehyde + 2 oxidized [2Fe-2S]-[ferredoxin] + H2O. The protein operates within xenobiotic degradation. Its activity is regulated as follows. Activity is stimulated in vitro by coexpression of a [3Fe-4S]-type ferredoxin. Functionally, part of the multicomponent N,N-dimethyl phenylurea N-demethylase responsible for the initial N-demethylation step during the bacterial metabolism of N,N-dimethyl-substituted phenylurea herbicides. Catalyzes the mono-N-demethylation of N,N-dimethyl-substituted phenylurea herbicides to their mono-N-demethylated derivatives. Is active on isoproturon (IPU), chlorotoluron, metoxuron, monoron, diuron, fluometuron and fenuron, but cannot transform the N-methoxy-N-methyl-substituted herbicides. The chain is N,N-dimethyl phenylurea N-demethylase subunit beta from Sphingobium sp. (strain YBL2).